A 192-amino-acid polypeptide reads, in one-letter code: Fe/S biogenesis protein NfuA (192 aa).

[4Fe-4S] cluster contacts are provided by C149 and C152.

Belongs to the NfuA family. As to quaternary structure, homodimer. [4Fe-4S] cluster serves as cofactor.

Functionally, involved in iron-sulfur cluster biogenesis. Binds a 4Fe-4S cluster, can transfer this cluster to apoproteins, and thereby intervenes in the maturation of Fe/S proteins. Could also act as a scaffold/chaperone for damaged Fe/S proteins. In Aeromonas salmonicida (strain A449), this protein is Fe/S biogenesis protein NfuA.